A 205-amino-acid polypeptide reads, in one-letter code: Small ribosomal subunit protein uS4 (205 aa).

The interval 1-46 is disordered; that stretch reads MSKRHSAKYKIDRRMGENLWGRPKSPVNQRSYGPGQHGQRRKQKVS. The region spanning 94-154 is the S4 RNA-binding domain; it reads SRLDAIVYRA…EKSRNMALVL (61 aa).

Belongs to the universal ribosomal protein uS4 family. In terms of assembly, part of the 30S ribosomal subunit. Contacts protein S5. The interaction surface between S4 and S5 is involved in control of translational fidelity.

Functionally, one of the primary rRNA binding proteins, it binds directly to 16S rRNA where it nucleates assembly of the body of the 30S subunit. With S5 and S12 plays an important role in translational accuracy. The protein is Small ribosomal subunit protein uS4 of Caulobacter sp. (strain K31).